The chain runs to 1214 residues: Formin-D (1214 aa).

The GBD/FH3 domain occupies 10-379 (KKEESPQSID…KMNNGESYLD (370 aa)). Residues 401-448 (SGEKAVLIQKEIEDLKKQKKRDQDKLAEKDKLLTKLAKRMRKMEEAIK) adopt a coiled-coil conformation. Positions 457 to 544 (NNQIEIESPP…GSGDGIPLPP (88 aa)) constitute an FH1 domain. Composition is skewed to polar residues over residues 462–479 (IESP…TTPG) and 518–534 (LDTT…QTEA). Disordered stretches follow at residues 462 to 490 (IESP…TSPV), 507 to 569 (APNG…SRPP), 868 to 948 (PKSV…PLKD), 1026 to 1045 (DKST…IKKS), 1054 to 1089 (LKKI…DDED), and 1133 to 1214 (MNLQ…EGEN). Residues 541–554 (PLPPGAPPPPPPPG) show a composition bias toward pro residues. An FH2 domain is found at 562 to 1037 (PQLCSRPPSI…STQRKNEKER (476 aa)). Residues 868 to 877 (PKSVEPKPDD) show a composition bias toward basic and acidic residues. Positions 930-940 (QVNTNSTSDSK) are enriched in polar residues. The stretch at 1019–1056 (EIEKSIKDKSTQRKNEKERKEMEIKKSKLEMIHSKLKK) forms a coiled coil. A compositionally biased stretch (polar residues) spans 1059-1071 (SPSSSNRILASNE). Positions 1065–1095 (RILASNESSPTSSTSSVVHQHDDEDEETIKE) constitute a DAD domain. Positions 1161–1171 (SSTYSSISSIY) are enriched in low complexity. Residues 1174–1214 (EPLDMSDQEDEDEEEEEDEEEEEEEEEGDDDNDNDEEEGEN) show a composition bias toward acidic residues. Residues 1176–1207 (LDMSDQEDEDEEEEEDEEEEEEEEEGDDDNDN) adopt a coiled-coil conformation.

This sequence belongs to the formin homology family. Diaphanous subfamily. Interacts (via GBD/FH3 domain) with activated Rho-GTPases.

Formins play an important role in the nucleation of actin and the formation of linear actin filaments. This chain is Formin-D (forD), found in Dictyostelium discoideum (Social amoeba).